Here is a 126-residue protein sequence, read N- to C-terminus: MAKGYYVKFETPKDLVNPILEALRAATQSGKVKKGTNEATKAIERGTSKLVVIAEDVEPPEVVAHLPILCDEQGAAYAFVPSKQDLGKALGIDITSAAAILDSGDAQHIVDQVISSIAKIKGETGK.

Belongs to the eukaryotic ribosomal protein eL8 family. Part of the 50S ribosomal subunit. Probably part of the RNase P complex.

It localises to the cytoplasm. Functionally, multifunctional RNA-binding protein that recognizes the K-turn motif in ribosomal RNA, the RNA component of RNase P, box H/ACA, box C/D and box C'/D' sRNAs. This is Large ribosomal subunit protein eL8 from Cenarchaeum symbiosum (strain A).